A 241-amino-acid polypeptide reads, in one-letter code: Phosphoribosylaminoimidazole-succinocarboxamide synthase (241 aa).

Belongs to the SAICAR synthetase family.

It catalyses the reaction 5-amino-1-(5-phospho-D-ribosyl)imidazole-4-carboxylate + L-aspartate + ATP = (2S)-2-[5-amino-1-(5-phospho-beta-D-ribosyl)imidazole-4-carboxamido]succinate + ADP + phosphate + 2 H(+). The protein operates within purine metabolism; IMP biosynthesis via de novo pathway; 5-amino-1-(5-phospho-D-ribosyl)imidazole-4-carboxamide from 5-amino-1-(5-phospho-D-ribosyl)imidazole-4-carboxylate: step 1/2. The polypeptide is Phosphoribosylaminoimidazole-succinocarboxamide synthase (Lacticaseibacillus casei (strain BL23) (Lactobacillus casei)).